We begin with the raw amino-acid sequence, 875 residues long: Probable inorganic carbon transporter subunit DabA (875 aa).

Zn(2+) contacts are provided by cysteine 380, aspartate 382, histidine 563, and cysteine 578.

This sequence belongs to the inorganic carbon transporter (TC 9.A.2) DabA family. In terms of assembly, forms a complex with DabB. Zn(2+) serves as cofactor.

The protein resides in the cell membrane. Its function is as follows. Part of an energy-coupled inorganic carbon pump. This chain is Probable inorganic carbon transporter subunit DabA, found in Geobacillus thermodenitrificans (strain NG80-2).